Here is a 554-residue protein sequence, read N- to C-terminus: MKKILIIILFIIIFIVLIYSGLWFVIMFSLSHSINQKYSGVHLNIGKGNNNPHQQYLVKFSKVQPYGFPFKLGIMVINWQEESINRAIEFTKPINIGYDLLGQKLFINFSGEALGKFKPVQRGFGVKFYNENCILSAKIPLNLKLFKMVLLKKNLFEFLNLIENIKFISDKTQIFDLVDNQKLYEEDHTILTMLVDKRQYYTSKQDFLNNIPQKLEFYYETEIIQSNLEDRIIPAGLLLYRPAWNNNFKFSGNFLISTSSLHFKDIAKDLTIKVNNAKINSNNFENNMNLLYKGKLNDFGNSNIHLSIESQFKLKPGFIIGFLEFLKKNYDKQTYLLKFSDNKIYKNFNNELVYILNNNKPYNFSILEDRPYHFNFNINLVTELKKLTRVQINTLSLYSNTSGFNITNETIINDLKDSYTKGIIVINNYSKIIEILSFYIYGVGSFKNLSKESQIVHIEALQSFLKTISDHPNSSNLIDTSIKYEFNLSDLNKAKIGNIDDINKLIPLYYLSLYQAAVKKMEPGANVKEKILELIPSINQKILEECVLSDIVTQ.

An N-terminal signal peptide occupies residues 1–33 (MKKILIIILFIIIFIVLIYSGLWFVIMFSLSHS).

This is an uncharacterized protein from Rickettsia prowazekii (strain Madrid E).